The chain runs to 190 residues: Translation machinery-associated protein 22 (190 aa).

The disordered stretch occupies residues 63-83; it reads LNVSGTKDSNAEEQPAKLTKE. Residues 99–170 enclose the SUI1 domain; it reads VLIKTIERTK…DIFDFILEKF (72 aa).

It belongs to the DENR family. In terms of assembly, interacts with the 40S ribosomal subunit.

The protein resides in the cytoplasm. This chain is Translation machinery-associated protein 22 (tma22), found in Schizosaccharomyces pombe (strain 972 / ATCC 24843) (Fission yeast).